The primary structure comprises 216 residues: Thiamine-phosphate synthase (216 aa).

4-amino-2-methyl-5-(diphosphooxymethyl)pyrimidine contacts are provided by residues 41 to 45 (QYREK) and N73. Mg(2+) contacts are provided by D74 and D93. S111 lines the 4-amino-2-methyl-5-(diphosphooxymethyl)pyrimidine pocket. 137-139 (TTT) is a 2-[(2R,5Z)-2-carboxy-4-methylthiazol-5(2H)-ylidene]ethyl phosphate binding site. Residue K140 participates in 4-amino-2-methyl-5-(diphosphooxymethyl)pyrimidine binding. Residues G168 and 188-189 (VS) each bind 2-[(2R,5Z)-2-carboxy-4-methylthiazol-5(2H)-ylidene]ethyl phosphate.

The protein belongs to the thiamine-phosphate synthase family. Requires Mg(2+) as cofactor.

The catalysed reaction is 2-[(2R,5Z)-2-carboxy-4-methylthiazol-5(2H)-ylidene]ethyl phosphate + 4-amino-2-methyl-5-(diphosphooxymethyl)pyrimidine + 2 H(+) = thiamine phosphate + CO2 + diphosphate. It carries out the reaction 2-(2-carboxy-4-methylthiazol-5-yl)ethyl phosphate + 4-amino-2-methyl-5-(diphosphooxymethyl)pyrimidine + 2 H(+) = thiamine phosphate + CO2 + diphosphate. It catalyses the reaction 4-methyl-5-(2-phosphooxyethyl)-thiazole + 4-amino-2-methyl-5-(diphosphooxymethyl)pyrimidine + H(+) = thiamine phosphate + diphosphate. It participates in cofactor biosynthesis; thiamine diphosphate biosynthesis; thiamine phosphate from 4-amino-2-methyl-5-diphosphomethylpyrimidine and 4-methyl-5-(2-phosphoethyl)-thiazole: step 1/1. Functionally, condenses 4-methyl-5-(beta-hydroxyethyl)thiazole monophosphate (THZ-P) and 2-methyl-4-amino-5-hydroxymethyl pyrimidine pyrophosphate (HMP-PP) to form thiamine monophosphate (TMP). In Chloroflexus aurantiacus (strain ATCC 29366 / DSM 635 / J-10-fl), this protein is Thiamine-phosphate synthase.